A 219-amino-acid chain; its full sequence is GTP cyclohydrolase-2 (219 aa).

A GTP-binding site is contributed by R51–E55. Positions 56, 67, and 69 each coordinate Zn(2+). GTP-binding positions include Q72, E94 to R96, and T116. Residue D128 is the Proton acceptor of the active site. Residue R130 is the Nucleophile of the active site. 2 residues coordinate GTP: T151 and K156.

The protein belongs to the GTP cyclohydrolase II family. Requires Zn(2+) as cofactor.

The enzyme catalyses GTP + 4 H2O = 2,5-diamino-6-hydroxy-4-(5-phosphoribosylamino)-pyrimidine + formate + 2 phosphate + 3 H(+). The protein operates within cofactor biosynthesis; riboflavin biosynthesis; 5-amino-6-(D-ribitylamino)uracil from GTP: step 1/4. Functionally, catalyzes the conversion of GTP to 2,5-diamino-6-ribosylamino-4(3H)-pyrimidinone 5'-phosphate (DARP), formate and pyrophosphate. The protein is GTP cyclohydrolase-2 of Pasteurella multocida (strain Pm70).